The primary structure comprises 247 residues: tRNA (guanine-N(1)-)-methyltransferase (247 aa).

Residues G115 and 134–139 (IGDFVL) contribute to the S-adenosyl-L-methionine site.

Belongs to the RNA methyltransferase TrmD family. In terms of assembly, homodimer.

The protein localises to the cytoplasm. The catalysed reaction is guanosine(37) in tRNA + S-adenosyl-L-methionine = N(1)-methylguanosine(37) in tRNA + S-adenosyl-L-homocysteine + H(+). In terms of biological role, specifically methylates guanosine-37 in various tRNAs. The protein is tRNA (guanine-N(1)-)-methyltransferase of Anaeromyxobacter sp. (strain K).